Reading from the N-terminus, the 543-residue chain is Zinc finger CCHC domain-containing protein 7 (543 aa).

Positions 51-71 (EEEHEEKNSGNSESSSSKPNQ) are disordered. A compositionally biased stretch (low complexity) spans 59 to 68 (SGNSESSSSK). Residues lysine 131, lysine 139, lysine 141, lysine 239, and lysine 254 each participate in a glycyl lysine isopeptide (Lys-Gly) (interchain with G-Cter in SUMO2) cross-link. 3 consecutive CCHC-type zinc fingers follow at residues 241 to 258 (IICR…NCPL), 263 to 280 (RRCF…SCPA), and 304 to 321 (KQCD…ACTE). A Glycyl lysine isopeptide (Lys-Gly) (interchain with G-Cter in SUMO2) cross-link involves residue lysine 339. The segment at 348–365 (AYCYHCAQKGHYGHECPE) adopts a CCHC-type 4 zinc-finger fold. Residues lysine 412, lysine 417, and lysine 435 each participate in a glycyl lysine isopeptide (Lys-Gly) (interchain with G-Cter in SUMO2) cross-link. The disordered stretch occupies residues 414-543 (PYIKAANENP…FLIKQRKKKS (130 aa)). 2 stretches are compositionally biased toward basic and acidic residues: residues 441 to 457 (QENK…NRNW) and 465 to 475 (RHREVDEDFPR). A Glycyl lysine isopeptide (Lys-Gly) (interchain with G-Cter in SUMO2) cross-link involves residue lysine 478. Over residues 479-491 (TYSSPGSFKTQKP) the composition is skewed to polar residues. Phosphoserine is present on residues serine 482 and serine 485. Residues lysine 487, lysine 490, and lysine 493 each participate in a glycyl lysine isopeptide (Lys-Gly) (interchain with G-Cter in SUMO2) cross-link. Over residues 493–502 (KPFHRSSHYH) the composition is skewed to basic residues. Residues 503–515 (TSREDKSPKEGKR) are compositionally biased toward basic and acidic residues. A Glycyl lysine isopeptide (Lys-Gly) (interchain with G-Cter in SUMO2) cross-link involves residue lysine 537.

Component of a nucleolar TRAMP-like complex, an ATP-dependent exosome regulatory complex consisting of a helicase (MTREX), an oligadenylate polymerase (TENT4B or TENT4A), and a substrate specific RNA-binding factor (ZCCHC7 or ZCCHC8). Several TRAMP-like complexes exist with specific compositions and are associated with nuclear, or nucleolar RNA exosomes.

Its subcellular location is the nucleus. The protein resides in the nucleolus. This chain is Zinc finger CCHC domain-containing protein 7 (ZCCHC7), found in Homo sapiens (Human).